A 445-amino-acid chain; its full sequence is Hydroxymethylglutaryl-CoA synthase (445 aa).

Aspartate 31 is a binding site for (3S)-3-hydroxy-3-methylglutaryl-CoA. Glutamate 83 acts as the Proton donor/acceptor in catalysis. Residues cysteine 120, threonine 163, serine 211, histidine 244, lysine 253, asparagine 328, and serine 364 each contribute to the (3S)-3-hydroxy-3-methylglutaryl-CoA site. Cysteine 120 acts as the Acyl-thioester intermediate in catalysis. Histidine 244 acts as the Proton donor/acceptor in catalysis.

This sequence belongs to the thiolase-like superfamily. HMG-CoA synthase family.

It carries out the reaction acetoacetyl-CoA + acetyl-CoA + H2O = (3S)-3-hydroxy-3-methylglutaryl-CoA + CoA + H(+). Its pathway is metabolic intermediate biosynthesis; (R)-mevalonate biosynthesis; (R)-mevalonate from acetyl-CoA: step 2/3. In contrast to bacterial and eukaryotic HMG-CoA synthases, is insensitive to feedback substrate inhibition by acetoacetyl-CoA. Enzymatic activity is inhibited by hymeglusin, which also blocks the propagation of H.volcanii cells in vivo, indicating the critical role that the mevalonate pathway plays in isoprenoid biosynthesis by these archaea. In terms of biological role, catalyzes the condensation of acetyl-CoA with acetoacetyl-CoA to form 3-hydroxy-3-methylglutaryl-CoA (HMG-CoA). Functions in the mevalonate (MVA) pathway leading to isopentenyl diphosphate (IPP), a key precursor for the biosynthesis of isoprenoid compounds such as archaeal membrane lipids. The protein is Hydroxymethylglutaryl-CoA synthase (hmgB) of Haloferax volcanii (strain ATCC 29605 / DSM 3757 / JCM 8879 / NBRC 14742 / NCIMB 2012 / VKM B-1768 / DS2) (Halobacterium volcanii).